A 228-amino-acid chain; its full sequence is Venom allergen 5 (228 aa).

Positions 1 to 22 (MTKIDLLARVFVIATIIALATA) are cleaved as a signal peptide. Cystine bridges form between cysteine 30/cysteine 124, cysteine 51/cysteine 117, and cysteine 195/cysteine 212. Residues 69-214 (KEHNDYGHKV…WNKHFLVCNY (146 aa)) form the SCP domain.

The protein belongs to the CRISP family. Venom allergen 5-like subfamily. In terms of tissue distribution, expressed by the venom gland.

The protein resides in the secreted. The protein is Venom allergen 5 of Rhynchium brunneum (Potter wasp).